The sequence spans 607 residues: DNA mismatch repair protein MutL (607 aa).

Residues 374–411 (RTEAGNEHVPSANRIQPPDPSIDMPDEPVPEQTDEPVA) form a disordered region. Positions 397–407 (MPDEPVPEQTD) are enriched in acidic residues.

This sequence belongs to the DNA mismatch repair MutL/HexB family.

Functionally, this protein is involved in the repair of mismatches in DNA. It is required for dam-dependent methyl-directed DNA mismatch repair. May act as a 'molecular matchmaker', a protein that promotes the formation of a stable complex between two or more DNA-binding proteins in an ATP-dependent manner without itself being part of a final effector complex. This Exiguobacterium sibiricum (strain DSM 17290 / CCUG 55495 / CIP 109462 / JCM 13490 / 255-15) protein is DNA mismatch repair protein MutL.